We begin with the raw amino-acid sequence, 138 residues long: Cellular retinoic acid-binding protein 2 (138 aa).

The short motif at 21–31 (KVLGVNVMLRK) is the Nuclear localization signal element. Residue Lys102 forms a Glycyl lysine isopeptide (Lys-Gly) (interchain with G-Cter in SUMO) linkage. Residue 133-135 (RVY) participates in all-trans-retinoate binding.

Belongs to the calycin superfamily. Fatty-acid binding protein (FABP) family. Interacts with importin alpha, RXR and RARA. Post-translationally, sumoylated in response to retinoic acid binding, sumoylation is critical for dissociation from ER and subsequent nuclear translocation.

It is found in the cytoplasm. The protein resides in the endoplasmic reticulum. The protein localises to the nucleus. Transports retinoic acid to the nucleus. Regulates the access of retinoic acid to the nuclear retinoic acid receptors. This Bos taurus (Bovine) protein is Cellular retinoic acid-binding protein 2 (CRABP2).